The chain runs to 96 residues: Beta-defensin 20 (96 aa).

The signal sequence occupies residues M1 to P21. Intrachain disulfides connect C24–C52, C32–C46, and C36–C53.

This sequence belongs to the beta-defensin family.

It is found in the secreted. Its function is as follows. Has antibacterial activity. The sequence is that of Beta-defensin 20 (Defb20) from Mus musculus (Mouse).